The chain runs to 422 residues: 5-hydroxytryptamine receptor 1A (422 aa).

A disordered region spans residues 1 to 23; that stretch reads MDVLSPGQGNNTTSPPAPFETGG. At 1 to 38 the chain is on the extracellular side; that stretch reads MDVLSPGQGNNTTSPPAPFETGGNTTGISDVTVSYQVI. Residues asparagine 10, asparagine 11, and asparagine 24 are each glycosylated (N-linked (GlcNAc...) asparagine). Residues 39 to 59 traverse the membrane as a helical segment; it reads TSLLLGTLIFCAVLGNACVVA. Over 60–73 the chain is Cytoplasmic; that stretch reads AIALERSLQNVANY. Residues 74–98 form a helical membrane-spanning segment; the sequence is LIGSLAVTDLMVSVLVLPMAALYQV. Over 99 to 107 the chain is Extracellular; it reads LNKWTLGQV. A helical transmembrane segment spans residues 108-132; that stretch reads TCDLFIALDVLCCTSSILHLCAIAL. The cysteines at positions 109 and 187 are disulfide-linked. Positions 116 and 120 each coordinate serotonin. The short motif at 133–135 is the DRY motif; important for ligand-induced conformation changes element; sequence DRY. The Cytoplasmic portion of the chain corresponds to 133–152; it reads DRYWAITDPIDYVNKRTPRR. Residues 153–174 form a helical membrane-spanning segment; sequence AAALISLTWLIGFLISIPPMLG. Topologically, residues 175 to 193 are extracellular; sequence WRTPEDRSDPDACTISKDH. Residues 194–216 traverse the membrane as a helical segment; the sequence is GYTIYSTFGAFYIPLLLMLVLYG. At 217-346 the chain is on the cytoplasmic side; sequence RIFRAARFRI…LARERKTVKT (130 aa). The disordered stretch occupies residues 235-262; that stretch reads KTGADTRHGASPAPQPKKSVNGESGSRN. Residues threonine 314, lysine 345, threonine 346, and glycine 352 each coordinate 1D-myo-inositol 4-phosphate. The chain crosses the membrane as a helical span at residues 347–370; sequence LGIIMGTFILCWLPFFIVALVLPF. Residues 371-378 are Extracellular-facing; the sequence is CESSCHMP. The chain crosses the membrane as a helical span at residues 379-403; it reads TLLGAIINWLGYSNSLLNPVIYAYF. Residues 396–400 carry the NPxxY motif; important for ligand-induced conformation changes and signaling motif; that stretch reads NPVIY. Residues phenylalanine 403, asparagine 404, and lysine 405 each contribute to the 1D-myo-inositol 4-phosphate site. The Cytoplasmic portion of the chain corresponds to 404–422; it reads NKDFQNAFKKIIKCKFCRQ.

This sequence belongs to the G-protein coupled receptor 1 family. 5-hydroxytryptamine receptor subfamily. HTR1A sub-subfamily. As to quaternary structure, heterodimer; heterodimerizes with GPER1. Interacts with YIF1B. Interacts with GPR39 and GALR1. As to expression, detected in lymph nodes, thymus and spleen. Detected in activated T-cells, but not in resting T-cells.

The protein resides in the cell membrane. It localises to the cell projection. The protein localises to the dendrite. Its activity is regulated as follows. G-protein coupled receptor activity is regulated by lipids: phosphatidylinositol 4-phosphate increases HTR1A-mediated activity. Binding to aripiprazol drug is regulated by cholesterol, which shapes the ligand-binding pocket, determining the specificity for aripiprazol. Activated by IHCH-7179 small molecule: IHCH-7179 acts both as an agonist activator for HTR1A and as an antagonist inhibitor for HTR2A. Activated by SEP-363856 small molecule: IHCH-7179 acts both as an agonist activator for HTR1A and TAAR1. G-protein coupled receptor for 5-hydroxytryptamine (serotonin). Also functions as a receptor for various drugs and psychoactive substances. Ligand binding causes a conformation change that triggers signaling via guanine nucleotide-binding proteins (G proteins) and modulates the activity of downstream effectors, such as adenylate cyclase. HTR1A is coupled to G(i)/G(o) G alpha proteins and mediates inhibitory neurotransmission: signaling inhibits adenylate cyclase activity and activates a phosphatidylinositol-calcium second messenger system that regulates the release of Ca(2+) ions from intracellular stores. Beta-arrestin family members regulate signaling by mediating both receptor desensitization and resensitization processes. Plays a role in the regulation of 5-hydroxytryptamine release and in the regulation of dopamine and 5-hydroxytryptamine metabolism. Plays a role in the regulation of dopamine and 5-hydroxytryptamine levels in the brain, and thereby affects neural activity, mood and behavior. Plays a role in the response to anxiogenic stimuli. In Homo sapiens (Human), this protein is 5-hydroxytryptamine receptor 1A.